A 465-amino-acid chain; its full sequence is Adenosylhomocysteinase (465 aa).

Residues T56, D131, and E191 each contribute to the substrate site. 192–194 serves as a coordination point for NAD(+); the sequence is TTT. Substrate contacts are provided by K221 and D225. NAD(+)-binding positions include N226, 255-260, E278, N313, 334-336, and N379; these read GYGDVG and IGH.

It belongs to the adenosylhomocysteinase family. NAD(+) is required as a cofactor.

It localises to the cytoplasm. The enzyme catalyses S-adenosyl-L-homocysteine + H2O = L-homocysteine + adenosine. Its pathway is amino-acid biosynthesis; L-homocysteine biosynthesis; L-homocysteine from S-adenosyl-L-homocysteine: step 1/1. May play a key role in the regulation of the intracellular concentration of adenosylhomocysteine. In Chelativorans sp. (strain BNC1), this protein is Adenosylhomocysteinase.